Here is a 505-residue protein sequence, read N- to C-terminus: Facilitated trehalose transporter Tret1 (505 aa).

Over 1-46 (MEMEIKDENLRNSVPFVRQLSTDSVKTKTEYDNEDGTPYKSTTQKL) the chain is Cytoplasmic. The helical transmembrane segment at 47 to 67 (FLWTQLLAAFAVSVGSMNVGF) threads the bilayer. The Extracellular segment spans residues 68 to 91 (SSGYTSPAVLTMNITLDITKEEIT). An N-linked (GlcNAc...) asparagine glycan is attached at Asn80. A helical membrane pass occupies residues 92 to 112 (WVGGLMPLAALVGGIVGGPLI). At 113–124 (EYLGRKKTIMGT) the chain is on the cytoplasmic side. The helical transmembrane segment at 125 to 145 (AVPFTIGWMLIANAINVVMVF) threads the bilayer. Over 146-149 (AGRV) the chain is Extracellular. The helical transmembrane segment at 150 to 170 (ICGVCVGIVSLAFPVYIGETI) threads the bilayer. Over 171–175 (QPEVR) the chain is Cytoplasmic. Residues 176-196 (GALGLLPTAFGNTGILLAFLV) form a helical membrane-spanning segment. At 197–201 (GSYLD) the chain is on the extracellular side. A helical transmembrane segment spans residues 202–222 (WSNLAFFGAAIPVPFFLLMIL). At 223–286 (TPETPRWYVS…QLFSKRYLPA (64 aa)) the chain is on the cytoplasmic side. Residues 287-307 (VMISLGLMLFQQLTGINAVIF) form a helical membrane-spanning segment. The Extracellular segment spans residues 308-323 (YAASIFQMSGSSVDEN). The chain crosses the membrane as a helical span at residues 324 to 344 (LASIIIGVVNFISTFIATMLI). Residues 345 to 350 (DRLGRK) are Cytoplasmic-facing. A helical transmembrane segment spans residues 351–371 (VLLYISSVAMITTLLALGAYF). At 372–390 (YLKQNHIDVTAYGWLPLAC) the chain is on the extracellular side. The helical transmembrane segment at 391–411 (LVIYVLGFSIGFGPIPWLMLG) threads the bilayer. The Cytoplasmic portion of the chain corresponds to 412 to 419 (EILPSKIR). Residues 420-437 (GTAASLATGFNWTCTFIV) traverse the membrane as a helical segment. Topologically, residues 438–451 (TKTFQNIIDAIYMH) are extracellular. A helical membrane pass occupies residues 452 to 472 (GTLWLFAVICIGGLLFVIFFV). Residues 473-505 (PETKGKSLEEIEMKLTSGSRRVRNISKQPENIC) are Cytoplasmic-facing.

The protein belongs to the major facilitator superfamily. Sugar transporter (TC 2.A.1.1) family. Trehalose transporter subfamily. In terms of tissue distribution, expressed in many larval tissues at a low level, moderate levels of expression are seen in testis and head and highest expression in muscle.

Its subcellular location is the cell membrane. Functionally, high-capacity facilitative transporter for trehalose. Does not transport maltose, sucrose or lactose. Mediates the bidirectional transfer of trehalose. Responsible for the transport of trehalose synthesized in the fat body and the incorporation of trehalose into other tissues that require a carbon source, thereby regulating trehalose levels in the hemolymph. This Bombyx mori (Silk moth) protein is Facilitated trehalose transporter Tret1.